A 401-amino-acid polypeptide reads, in one-letter code: Dual-specificity RNA methyltransferase RlmN (401 aa).

Residue Glu114 is the Proton acceptor of the active site. A Radical SAM core domain is found at 120-365 (DKGRGTLCVS…TMVRRTRGDD (246 aa)). An intrachain disulfide couples Cys127 to Cys370. [4Fe-4S] cluster is bound by residues Cys134, Cys138, and Cys141. S-adenosyl-L-methionine-binding positions include 187–188 (GE), Ser219, 241–243 (SLH), and Asn327. The active-site S-methylcysteine intermediate is the Cys370.

This sequence belongs to the radical SAM superfamily. RlmN family. [4Fe-4S] cluster serves as cofactor.

It localises to the cytoplasm. It carries out the reaction adenosine(2503) in 23S rRNA + 2 reduced [2Fe-2S]-[ferredoxin] + 2 S-adenosyl-L-methionine = 2-methyladenosine(2503) in 23S rRNA + 5'-deoxyadenosine + L-methionine + 2 oxidized [2Fe-2S]-[ferredoxin] + S-adenosyl-L-homocysteine. It catalyses the reaction adenosine(37) in tRNA + 2 reduced [2Fe-2S]-[ferredoxin] + 2 S-adenosyl-L-methionine = 2-methyladenosine(37) in tRNA + 5'-deoxyadenosine + L-methionine + 2 oxidized [2Fe-2S]-[ferredoxin] + S-adenosyl-L-homocysteine. Its function is as follows. Specifically methylates position 2 of adenine 2503 in 23S rRNA and position 2 of adenine 37 in tRNAs. m2A2503 modification seems to play a crucial role in the proofreading step occurring at the peptidyl transferase center and thus would serve to optimize ribosomal fidelity. This chain is Dual-specificity RNA methyltransferase RlmN, found in Xanthomonas campestris pv. campestris (strain 8004).